The chain runs to 196 residues: Peroxisome assembly protein 22 (196 aa).

Residues 15–37 traverse the membrane as a helical segment; the sequence is LWIAALVAASIVTISYKVYSSYI.

The protein belongs to the peroxin-22 family.

The protein localises to the peroxisome membrane. In terms of biological role, involved in peroxisome biogenesis. The protein is Peroxisome assembly protein 22 (PEX22) of Debaryomyces hansenii (strain ATCC 36239 / CBS 767 / BCRC 21394 / JCM 1990 / NBRC 0083 / IGC 2968) (Yeast).